We begin with the raw amino-acid sequence, 445 residues long: Tripartite motif-containing protein 43B (445 aa).

Residues 16–57 (CSICQGIFMNPVYLKCGHKFCEACLLLFQEDIKFPAYCPMCM) form an RING-type zinc finger. A B box-type zinc finger spans residues 88–129 (SEEHKCVTHKAKKMIFCDKSKILLCHLCSDSQEHSGHTHCSI). The Zn(2+) site is built by C93, H96, C115, and H121. The B30.2/SPRY domain maps to 271–445 (RLRAHSIPGL…VRPFFSAVYT (175 aa)).

This sequence belongs to the TRIM/RBCC family.

In Mus musculus (Mouse), this protein is Tripartite motif-containing protein 43B.